The primary structure comprises 172 residues: Peptidyl-tRNA hydrolase (172 aa).

Tyrosine 10 serves as a coordination point for tRNA. Histidine 15 functions as the Proton acceptor in the catalytic mechanism. Residues phenylalanine 59, asparagine 61, and asparagine 101 each contribute to the tRNA site.

The protein belongs to the PTH family. Monomer.

Its subcellular location is the cytoplasm. The catalysed reaction is an N-acyl-L-alpha-aminoacyl-tRNA + H2O = an N-acyl-L-amino acid + a tRNA + H(+). Functionally, hydrolyzes ribosome-free peptidyl-tRNAs (with 1 or more amino acids incorporated), which drop off the ribosome during protein synthesis, or as a result of ribosome stalling. Its function is as follows. Catalyzes the release of premature peptidyl moieties from peptidyl-tRNA molecules trapped in stalled 50S ribosomal subunits, and thus maintains levels of free tRNAs and 50S ribosomes. This chain is Peptidyl-tRNA hydrolase, found in Rubrobacter xylanophilus (strain DSM 9941 / JCM 11954 / NBRC 16129 / PRD-1).